Reading from the N-terminus, the 201-residue chain is Glycine-rich protein 23 (201 aa).

The signal sequence occupies residues 1 to 24; that stretch reads MGLISGKVCVFIFVFALVAEFSFG. 21 repeat units span residues 62–67, 68–73, 74–79, 80–85, 86–91, 92–97, 98–103, 104–109, 110–115, 116–121, 122–129, 130–135, 136–143, 144–151, 152–157, 158–163, 164–169, 170–175, 176–182, 184–189, and 190–194. The interval 62–194 is 21 X 6 AA approximate tandem repeats of G-L-G-G-G-G, Gly-rich; the sequence is GLGGGGGLGG…IGGGGGLGGG (133 aa).

The protein is Glycine-rich protein 23 of Arabidopsis thaliana (Mouse-ear cress).